Reading from the N-terminus, the 550-residue chain is Hydroxylamine reductase (550 aa).

Positions 3, 6, 18, and 25 each coordinate [2Fe-2S] cluster. Residues H249, E273, C317, C405, C433, C458, E492, and K494 each contribute to the hybrid [4Fe-2O-2S] cluster site. C405 carries the cysteine persulfide modification.

It belongs to the HCP family. It depends on [2Fe-2S] cluster as a cofactor. The cofactor is hybrid [4Fe-2O-2S] cluster.

It localises to the cytoplasm. The catalysed reaction is A + NH4(+) + H2O = hydroxylamine + AH2 + H(+). Functionally, catalyzes the reduction of hydroxylamine to form NH(3) and H(2)O. This chain is Hydroxylamine reductase, found in Pectobacterium carotovorum subsp. carotovorum (strain PC1).